A 423-amino-acid chain; its full sequence is AP-1 complex subunit mu-2 (423 aa).

An MHD domain is found at lysine 168–arginine 421.

The protein belongs to the adaptor complexes medium subunit family. In terms of assembly, adaptor protein complex 1 (AP-1) is a heterotetramer composed of two large adaptins (gamma-type subunit AP1G1 and beta-type subunit AP1B1), a medium adaptin (mu-type subunit AP1M1 or AP1M2) and a small adaptin (sigma-type subunit AP1S1 or AP1S2 or AP1S3). Interacts with P2X4. In terms of processing, phosphorylation of membrane-bound AP1M1/AP1M2 increases its affinity for sorting signals.

It is found in the golgi apparatus. It localises to the cytoplasmic vesicle. The protein localises to the clathrin-coated vesicle membrane. Its function is as follows. Subunit of clathrin-associated adaptor protein complex 1 that plays a role in protein sorting in the trans-Golgi network (TGN) and endosomes. The AP complexes mediate the recruitment of clathrin to membranes and the recognition of sorting signals within the cytosolic tails of transmembrane cargo molecules. This chain is AP-1 complex subunit mu-2 (Ap1m2), found in Mus musculus (Mouse).